The primary structure comprises 157 residues: Prefoldin subunit alpha (157 aa).

Belongs to the prefoldin subunit alpha family. Heterohexamer of two alpha and four beta subunits.

It localises to the cytoplasm. Molecular chaperone capable of stabilizing a range of proteins. Seems to fulfill an ATP-independent, HSP70-like function in archaeal de novo protein folding. The protein is Prefoldin subunit alpha of Methanopyrus kandleri (strain AV19 / DSM 6324 / JCM 9639 / NBRC 100938).